The sequence spans 184 residues: Holliday junction branch migration complex subunit RuvA (184 aa).

Residues 1–64 form a domain I region; it reads MIVAVEGIIT…EDADLLYGFL (64 aa). The interval 65-145 is domain II; sequence DEKEKRMFEM…ANDGEQYKIE (81 aa). Residue E145 is a region of interest, flexible linker. The segment at 145–184 is domain III; the sequence is ETISALENLGFKRDKINKILLNCKSTNTADLIKEALKKLA.

Belongs to the RuvA family. As to quaternary structure, homotetramer. Forms an RuvA(8)-RuvB(12)-Holliday junction (HJ) complex. HJ DNA is sandwiched between 2 RuvA tetramers; dsDNA enters through RuvA and exits via RuvB. An RuvB hexamer assembles on each DNA strand where it exits the tetramer. Each RuvB hexamer is contacted by two RuvA subunits (via domain III) on 2 adjacent RuvB subunits; this complex drives branch migration. In the full resolvosome a probable DNA-RuvA(4)-RuvB(12)-RuvC(2) complex forms which resolves the HJ.

The protein localises to the cytoplasm. Functionally, the RuvA-RuvB-RuvC complex processes Holliday junction (HJ) DNA during genetic recombination and DNA repair, while the RuvA-RuvB complex plays an important role in the rescue of blocked DNA replication forks via replication fork reversal (RFR). RuvA specifically binds to HJ cruciform DNA, conferring on it an open structure. The RuvB hexamer acts as an ATP-dependent pump, pulling dsDNA into and through the RuvAB complex. HJ branch migration allows RuvC to scan DNA until it finds its consensus sequence, where it cleaves and resolves the cruciform DNA. This Campylobacter hominis (strain ATCC BAA-381 / DSM 21671 / CCUG 45161 / LMG 19568 / NCTC 13146 / CH001A) protein is Holliday junction branch migration complex subunit RuvA.